The chain runs to 261 residues: MNDSLTIAGKSYRSRLLVGTGKYKDFAETRAAIDASGAEIVTVAIRRTNIGQNADEPNLLDVLPPERFTILPNTAGCYTADDAVRTLRLARELLDGHALVKLEVLGDPVSLFPNMPETLKAAETLVKDGFQVMVYCADDPIQAKMLEDIGCVAVMPLASLIGSGMGILNPWNLRLIIDQANVPVLVDAGVGTASDAAIAMELGCDGVLMNTAIAHAKDPVLMASAMKKAVEAGREAFLAGRMPRKHYSADPSSPTSGLIGS.

The active-site Schiff-base intermediate with DXP is Lys101. Residues Gly162, 188–189, and 210–211 each bind 1-deoxy-D-xylulose 5-phosphate; these read AG and NT.

It belongs to the ThiG family. In terms of assembly, homotetramer. Forms heterodimers with either ThiH or ThiS.

It localises to the cytoplasm. It carries out the reaction [ThiS sulfur-carrier protein]-C-terminal-Gly-aminoethanethioate + 2-iminoacetate + 1-deoxy-D-xylulose 5-phosphate = [ThiS sulfur-carrier protein]-C-terminal Gly-Gly + 2-[(2R,5Z)-2-carboxy-4-methylthiazol-5(2H)-ylidene]ethyl phosphate + 2 H2O + H(+). Its pathway is cofactor biosynthesis; thiamine diphosphate biosynthesis. In terms of biological role, catalyzes the rearrangement of 1-deoxy-D-xylulose 5-phosphate (DXP) to produce the thiazole phosphate moiety of thiamine. Sulfur is provided by the thiocarboxylate moiety of the carrier protein ThiS. In vitro, sulfur can be provided by H(2)S. In Aromatoleum aromaticum (strain DSM 19018 / LMG 30748 / EbN1) (Azoarcus sp. (strain EbN1)), this protein is Thiazole synthase.